The following is a 70-amino-acid chain: DNA-directed RNA polymerase subunit epsilon (70 aa).

It belongs to the RNA polymerase subunit epsilon family. As to quaternary structure, RNAP is composed of a core of 2 alpha, a beta and a beta' subunit. The core is associated with a delta subunit, and at least one of epsilon or omega. When a sigma factor is associated with the core the holoenzyme is formed, which can initiate transcription.

The catalysed reaction is RNA(n) + a ribonucleoside 5'-triphosphate = RNA(n+1) + diphosphate. Functionally, a non-essential component of RNA polymerase (RNAP). The chain is DNA-directed RNA polymerase subunit epsilon from Bacillus cytotoxicus (strain DSM 22905 / CIP 110041 / 391-98 / NVH 391-98).